A 255-amino-acid chain; its full sequence is tRNA pseudouridine synthase A (255 aa).

Asp56 acts as the Nucleophile in catalysis. A substrate-binding site is contributed by Tyr114.

It belongs to the tRNA pseudouridine synthase TruA family. In terms of assembly, homodimer.

The enzyme catalyses uridine(38/39/40) in tRNA = pseudouridine(38/39/40) in tRNA. Its function is as follows. Formation of pseudouridine at positions 38, 39 and 40 in the anticodon stem and loop of transfer RNAs. The protein is tRNA pseudouridine synthase A of Methylacidiphilum infernorum (isolate V4) (Methylokorus infernorum (strain V4)).